The primary structure comprises 373 residues: Ribosomal protein uL16 3-hydroxylase (373 aa).

In terms of domain architecture, JmjC spans 92-219 (PTAALMRPFR…LISGFADYVL (128 aa)). Substrate-binding positions include serine 114, 125–127 (HLD), arginine 140, and histidine 187. 2 residues coordinate Fe cation: histidine 125 and aspartate 127. Residue histidine 187 coordinates Fe cation.

Belongs to the ROX family. RoxA/YcfD subfamily. In terms of assembly, homodimer. The cofactor is Fe(2+).

It catalyses the reaction L-arginyl-[ribosomal protein uL16] + 2-oxoglutarate + O2 = (3R)-3-hydroxy-L-arginyl-[ribosomal protein uL16] + succinate + CO2. Functionally, growth-regulating oxygenase that catalyzes the hydroxylation of ribosomal protein uL16 on 'Arg-81'. The chain is Ribosomal protein uL16 3-hydroxylase (roxA) from Escherichia coli (strain K12).